A 329-amino-acid polypeptide reads, in one-letter code: Glycerol-3-phosphate dehydrogenase [NAD(P)+] (329 aa).

NADPH-binding residues include tryptophan 11, arginine 30, and lysine 103. Positions 103, 132, and 134 each coordinate sn-glycerol 3-phosphate. An NADPH-binding site is contributed by alanine 136. Sn-glycerol 3-phosphate is bound by residues lysine 187, aspartate 240, serine 250, arginine 251, and asparagine 252. Lysine 187 serves as the catalytic Proton acceptor. An NADPH-binding site is contributed by arginine 251. 2 residues coordinate NADPH: valine 275 and glutamate 277.

It belongs to the NAD-dependent glycerol-3-phosphate dehydrogenase family.

It localises to the cytoplasm. It carries out the reaction sn-glycerol 3-phosphate + NAD(+) = dihydroxyacetone phosphate + NADH + H(+). It catalyses the reaction sn-glycerol 3-phosphate + NADP(+) = dihydroxyacetone phosphate + NADPH + H(+). Its pathway is membrane lipid metabolism; glycerophospholipid metabolism. In terms of biological role, catalyzes the reduction of the glycolytic intermediate dihydroxyacetone phosphate (DHAP) to sn-glycerol 3-phosphate (G3P), the key precursor for phospholipid synthesis. This is Glycerol-3-phosphate dehydrogenase [NAD(P)+] from Nitrosomonas europaea (strain ATCC 19718 / CIP 103999 / KCTC 2705 / NBRC 14298).